A 64-amino-acid chain; its full sequence is MKASELRGKDAAGLNQELSELLKAQFSLRMQKATQQLQNTSQLKKVRKDIARVQTVLTEKANAK.

The protein belongs to the universal ribosomal protein uL29 family.

The protein is Large ribosomal subunit protein uL29 of Cupriavidus metallidurans (strain ATCC 43123 / DSM 2839 / NBRC 102507 / CH34) (Ralstonia metallidurans).